Here is a 188-residue protein sequence, read N- to C-terminus: Guanylate kinase (188 aa).

Residues 8-188 (GRIVVLAGPS…AVAAISEILR (181 aa)) form the Guanylate kinase-like domain. Position 15–22 (15–22 (GPSAVGKS)) interacts with ATP.

The protein belongs to the guanylate kinase family.

Its subcellular location is the cytoplasm. The catalysed reaction is GMP + ATP = GDP + ADP. In terms of biological role, essential for recycling GMP and indirectly, cGMP. The chain is Guanylate kinase from Corynebacterium jeikeium (strain K411).